A 421-amino-acid polypeptide reads, in one-letter code: 4-methylaminobutanoate oxidase (methylamine-forming) (421 aa).

Residues glutamate 31, arginine 33, arginine 39, and glutamate 379 each coordinate FAD.

This sequence belongs to the flavin monoamine oxidase family. In terms of assembly, monomer. It depends on FAD as a cofactor.

The catalysed reaction is 4-(methylamino)butanoate + O2 + H2O = succinate semialdehyde + methylamine + H2O2. Its pathway is alkaloid degradation; nicotine degradation. In terms of biological role, catalyzes the removal of methylamine from 4-methylaminobutanoate with the formation of succinate semialdehyde. Is involved in the catabolism of 4-methylaminobutanoate produced from nicotine. Has a very weak monoamine oxidase activity with 4-aminobutanoate. Cannot use spermidine, spermine, sarcosine, dimethylglycine, glycine, choline, betaine, alpha-methylamino isobutyrate, methylamine propionitrile and methylamino propylamine as substrate. The polypeptide is 4-methylaminobutanoate oxidase (methylamine-forming) (mao) (Paenarthrobacter nicotinovorans (Arthrobacter nicotinovorans)).